The chain runs to 429 residues: 3-phosphoshikimate 1-carboxyvinyltransferase (429 aa).

Lys-20, Ser-21, and Arg-25 together coordinate 3-phosphoshikimate. Lys-20 is a binding site for phosphoenolpyruvate. Residues Gly-89 and Arg-118 each contribute to the phosphoenolpyruvate site. 3-phosphoshikimate is bound by residues Ser-164, Ser-165, Gln-166, Ser-192, Asp-311, and Lys-338. Gln-166 lines the phosphoenolpyruvate pocket. The active-site Proton acceptor is Asp-311. Phosphoenolpyruvate-binding residues include Arg-342 and Arg-384.

It belongs to the EPSP synthase family. In terms of assembly, monomer.

It localises to the cytoplasm. It carries out the reaction 3-phosphoshikimate + phosphoenolpyruvate = 5-O-(1-carboxyvinyl)-3-phosphoshikimate + phosphate. It participates in metabolic intermediate biosynthesis; chorismate biosynthesis. Its function is as follows. Catalyzes the transfer of the enolpyruvyl moiety of phosphoenolpyruvate (PEP) to the 5-hydroxyl of shikimate-3-phosphate (S3P) to produce enolpyruvyl shikimate-3-phosphate and inorganic phosphate. This Methanococcus maripaludis (strain C6 / ATCC BAA-1332) protein is 3-phosphoshikimate 1-carboxyvinyltransferase.